Consider the following 294-residue polypeptide: Homeobox-leucine zipper protein ATHB-13 (294 aa).

The homeobox DNA-binding region spans 82–141 (MGEKKRRLNMEQVKTLEKNFELGNKLEPERKMQLARALGLQPRQIAIWFQNRRARWKTKQ). The tract at residues 142 to 177 (LEKDYDTLKRQFDTLKAENDLLQTHNQKLQAEIMGL) is leucine-zipper. Positions 181 to 246 (EQTESINLNK…FFPPSPATAT (66 aa)) are disordered. The segment covering 197–210 (SNRSDNSSDNLRLD) has biased composition (low complexity). Residues 214–223 (APPSNDSTLT) show a composition bias toward polar residues.

This sequence belongs to the HD-ZIP homeobox family. Class I subfamily. As to expression, predominantly expressed in leaves and flowers.

The protein localises to the nucleus. In terms of biological role, probable transcription factor that may act in the sucrose-signaling pathway. The sequence is that of Homeobox-leucine zipper protein ATHB-13 (ATHB-13) from Arabidopsis thaliana (Mouse-ear cress).